The sequence spans 144 residues: Large ribosomal subunit protein uL15 (144 aa).

Residues 1–50 form a disordered region; sequence MRLNTLSPAAGAKSAKKRVGRGIGSGLGKTGGRGVKGAGSRSGGGVRAGF. Residues 21 to 50 show a composition bias toward gly residues; the sequence is RGIGSGLGKTGGRGVKGAGSRSGGGVRAGF.

The protein belongs to the universal ribosomal protein uL15 family. As to quaternary structure, part of the 50S ribosomal subunit.

Its function is as follows. Binds to the 23S rRNA. The chain is Large ribosomal subunit protein uL15 from Tolumonas auensis (strain DSM 9187 / NBRC 110442 / TA 4).